Here is a 146-residue protein sequence, read N- to C-terminus: 3-hydroxyacyl-[acyl-carrier-protein] dehydratase FabZ (146 aa).

His48 is a catalytic residue.

The protein belongs to the thioester dehydratase family. FabZ subfamily.

The protein localises to the cytoplasm. It carries out the reaction a (3R)-hydroxyacyl-[ACP] = a (2E)-enoyl-[ACP] + H2O. Involved in unsaturated fatty acids biosynthesis. Catalyzes the dehydration of short chain beta-hydroxyacyl-ACPs and long chain saturated and unsaturated beta-hydroxyacyl-ACPs. This is 3-hydroxyacyl-[acyl-carrier-protein] dehydratase FabZ from Paracidovorax citrulli (strain AAC00-1) (Acidovorax citrulli).